We begin with the raw amino-acid sequence, 274 residues long: Penicillin-insensitive murein endopeptidase (274 aa).

Residues 1 to 19 (MNKTAIALLALLASSVSLA) form the signal peptide. Disulfide bonds link Cys-44-Cys-265, Cys-187-Cys-235, and Cys-216-Cys-223. Zn(2+) is bound by residues His-110, His-113, Asp-120, Asp-147, His-150, and His-211. Residues 227 to 274 (PLPPPGDGCGAELQSWFEPPKPGTTKPEKKTPPPLPPSCQALLDEHVI) are disordered.

The protein belongs to the peptidase M74 family. Dimer. It depends on Zn(2+) as a cofactor.

It localises to the periplasm. In terms of biological role, murein endopeptidase that cleaves the D-alanyl-meso-2,6-diamino-pimelyl amide bond that connects peptidoglycan strands. Likely plays a role in the removal of murein from the sacculus. The protein is Penicillin-insensitive murein endopeptidase of Escherichia coli O157:H7.